Here is a 417-residue protein sequence, read N- to C-terminus: S-adenosylmethionine synthase (417 aa).

ATP is bound at residue His-16. Asp-18 serves as a coordination point for Mg(2+). Glu-44 contacts K(+). The L-methionine site is built by Glu-57 and Gln-100. The tract at residues 100 to 110 is flexible loop; that stretch reads QSPDIAQGVDT. ATP contacts are provided by residues 175–177, 251–252, Asp-260, 266–267, Ala-283, and Lys-287; these read DGK, KF, and RK. Asp-260 lines the L-methionine pocket. Lys-291 provides a ligand contact to L-methionine.

It belongs to the AdoMet synthase family. Homotetramer; dimer of dimers. Mg(2+) is required as a cofactor. Requires K(+) as cofactor.

Its subcellular location is the cytoplasm. It carries out the reaction L-methionine + ATP + H2O = S-adenosyl-L-methionine + phosphate + diphosphate. The protein operates within amino-acid biosynthesis; S-adenosyl-L-methionine biosynthesis; S-adenosyl-L-methionine from L-methionine: step 1/1. Catalyzes the formation of S-adenosylmethionine (AdoMet) from methionine and ATP. The overall synthetic reaction is composed of two sequential steps, AdoMet formation and the subsequent tripolyphosphate hydrolysis which occurs prior to release of AdoMet from the enzyme. The sequence is that of S-adenosylmethionine synthase from Synechococcus elongatus (strain ATCC 33912 / PCC 7942 / FACHB-805) (Anacystis nidulans R2).